A 124-amino-acid polypeptide reads, in one-letter code: Small ribosomal subunit protein uS12 (124 aa).

Asp-89 is subject to 3-methylthioaspartic acid.

The protein belongs to the universal ribosomal protein uS12 family. As to quaternary structure, part of the 30S ribosomal subunit. Contacts proteins S8 and S17. May interact with IF1 in the 30S initiation complex.

Functionally, with S4 and S5 plays an important role in translational accuracy. Its function is as follows. Interacts with and stabilizes bases of the 16S rRNA that are involved in tRNA selection in the A site and with the mRNA backbone. Located at the interface of the 30S and 50S subunits, it traverses the body of the 30S subunit contacting proteins on the other side and probably holding the rRNA structure together. The combined cluster of proteins S8, S12 and S17 appears to hold together the shoulder and platform of the 30S subunit. This Pasteurella multocida (strain Pm70) protein is Small ribosomal subunit protein uS12.